The chain runs to 333 residues: Phospholipid phosphatase-related protein type 1 (333 aa).

Helical transmembrane passes span 12–32, 66–86, and 126–146; these read IIPC…LLAY, FIQP…IIFV, and FIGV…AGQV. N-linked (GlcNAc...) asparagine glycosylation occurs at asparagine 162. The next 3 membrane-spanning stretches (helical) occupy residues 200-217, 223-243, and 256-276; these read ASLS…ITST, SRLA…LTGL, and VVAG…CVVN.

This sequence belongs to the PA-phosphatase related phosphoesterase family.

The protein resides in the cell membrane. The protein localises to the cell projection. It localises to the neuron projection. Its function is as follows. May play a role in neurite outgrowth and neurogenesis. The sequence is that of Phospholipid phosphatase-related protein type 1 (plppr1) from Danio rerio (Zebrafish).